The chain runs to 203 residues: Recombination protein RecR (203 aa).

A C4-type zinc finger spans residues 56–71 (CSVCGNVSDEERCRIC). A Toprim domain is found at 79-179 (SLVCVVEEPK…TVTRIASGLP (101 aa)).

Belongs to the RecR family.

May play a role in DNA repair. It seems to be involved in an RecBC-independent recombinational process of DNA repair. It may act with RecF and RecO. This Mycolicibacterium smegmatis (strain ATCC 700084 / mc(2)155) (Mycobacterium smegmatis) protein is Recombination protein RecR.